A 341-amino-acid polypeptide reads, in one-letter code: Thromboxane A2 receptor (341 aa).

Residues 1 to 29 lie on the Extracellular side of the membrane; it reads MWPNGTSLGACFRPVNITLQERRAIASPW. 2 N-linked (GlcNAc...) asparagine glycosylation sites follow: N4 and N16. Residues 30–52 traverse the membrane as a helical segment; the sequence is FAASFCALGLGSNLLALSVLAGA. Residues 53–65 lie on the Cytoplasmic side of the membrane; the sequence is RPGAGPRSSFLAL. A helical membrane pass occupies residues 66–86; sequence LCGLVLTDFLGLLVTGAIVAS. The Extracellular portion of the chain corresponds to 87 to 105; the sequence is QHAALLDWRATDPSCRLCY. A disulfide bridge connects residues C104 and C181. A helical transmembrane segment spans residues 106 to 127; it reads FMGVAMVFFGLCPLLLGAAMAS. Over 128 to 147 the chain is Cytoplasmic; it reads ERFVGITRPFSRPTATSRRA. The chain crosses the membrane as a helical span at residues 148–170; that stretch reads WATVGLVWVAAGALGLLPLLGLG. At 171–191 the chain is on the extracellular side; that stretch reads RYSVQYPGSWCFLTLGTQRGD. Residues 192 to 217 traverse the membrane as a helical segment; it reads VVFGLIFALLGSASVGLSLLLNTVSV. Residues 218–244 are Cytoplasmic-facing; that stretch reads ATLCRVYHTREATQRPRDCEVEMMVQL. A helical membrane pass occupies residues 245–268; sequence VGIMVVATVCWMPLLVFIMQTLLQ. The Extracellular segment spans residues 269–287; it reads TPPVMSFSGQLLRATEHQL. Residues 288 to 309 form a helical membrane-spanning segment; the sequence is LIYLRVATWNQILDPWVYILFR. The Cytoplasmic portion of the chain corresponds to 310–341; the sequence is RSVLRRLHPRFSSQLQAVSLRRPPAQAMLSGP. The residue at position 328 (S328) is a Phosphoserine.

Belongs to the G-protein coupled receptor 1 family. As to quaternary structure, interacts with RPGRIP1L. Interacts with RACK1; the interaction regulates TBXA2R cell surface expression.

The protein localises to the cell membrane. Its function is as follows. Receptor for thromboxane A2 (TXA2), a potent stimulator of platelet aggregation. The activity of this receptor is mediated by a G-protein that activates a phosphatidylinositol-calcium second messenger system. In the kidney, the binding of TXA2 to glomerular TP receptors causes intense vasoconstriction. Activates phospholipase C and adenylyl cyclase. The sequence is that of Thromboxane A2 receptor (Tbxa2r) from Mus musculus (Mouse).